The chain runs to 496 residues: Stomatal closure-related actin-binding protein 1 (496 aa).

Positions 126–269 form a coiled coil; the sequence is RNKDDVEEAI…FLQLQKKLAM (144 aa).

Belongs to the SCAB family. In terms of assembly, dimer. Dimerization is required for actin-binding activity. In terms of tissue distribution, expressed in roots, stems, leaves, flowers, siliques and guard cells.

It is found in the cytoplasm. Its subcellular location is the cytoskeleton. In terms of biological role, plant-specific actin binding protein that bundles and stabilizes microfilaments (MFs). Has no nucleation or capping activity. Regulates MF reorganization during stomatal closure. The binding to F-actin is insensitive to Ca(2+) and pH. Binds weakly to inositol phosphates. This is Stomatal closure-related actin-binding protein 1 from Arabidopsis thaliana (Mouse-ear cress).